The following is an 806-amino-acid chain: Phenylalanine--tRNA ligase beta subunit (806 aa).

The tRNA-binding domain occupies 40-155; sequence NKGVKGVVVG…SDAEVGADAL (116 aa). Residues 409 to 484 enclose the B5 domain; the sequence is VQERTVSVTA…RLYGYDHIPV (76 aa). Residues D462, D468, E471, and E472 each coordinate Mg(2+). The region spanning 712 to 805 is the FDX-ACB domain; that stretch reads PRFPSMTRDM…VEEKFGAELR (94 aa).

Belongs to the phenylalanyl-tRNA synthetase beta subunit family. Type 1 subfamily. In terms of assembly, tetramer of two alpha and two beta subunits. Mg(2+) serves as cofactor.

The protein resides in the cytoplasm. The enzyme catalyses tRNA(Phe) + L-phenylalanine + ATP = L-phenylalanyl-tRNA(Phe) + AMP + diphosphate + H(+). The chain is Phenylalanine--tRNA ligase beta subunit from Bacillus cereus (strain ZK / E33L).